The chain runs to 727 residues: NHL repeat-containing protein 2 (727 aa).

Residues 43 to 198 (RERDLTVPEL…TLKFYKERGQ (156 aa)) enclose the Thioredoxin domain. 6 NHL repeats span residues 207 to 249 (KLYK…TLKN), 260 to 302 (NSGR…IDLE), 330 to 364 (ISSP…VWAL), 404 to 434 (FAQP…VRMI), 456 to 500 (AFGD…VDPK), and 513 to 557 (ASNV…LDLE).

In terms of assembly, monomer.

It localises to the cytoplasm. Its subcellular location is the cytosol. Functionally, required for normal embryonic development. The sequence is that of NHL repeat-containing protein 2 (NHLRC2) from Gallus gallus (Chicken).